Consider the following 236-residue polypeptide: Small ribosomal subunit protein uS2c (236 aa).

Belongs to the universal ribosomal protein uS2 family.

It is found in the plastid. The protein resides in the chloroplast. In Phaseolus vulgaris (Kidney bean), this protein is Small ribosomal subunit protein uS2c (rps2).